A 453-amino-acid polypeptide reads, in one-letter code: MKTKFCTGGEAEPSPLGLLLSCGGNAAPTPGVGQQRDAAGELESKQLGGRTQPLALPPPPPPPLPLPPPPSPPLADEQPEPRTRRRAYLWCKEFLPGAWRGLREDQFHISVIRGGLSNMLFQCSLPDSIASVGDEPRKVLLRLYGAILKMRSCNKEGSEQAQNENEFQGAEAMVLESVMFAILAERSLGPKLFGIFPQGRLEQFIPSRRLDTEELRLPDISAEIAEKMATFHGMKMPFNKEPKWLFGTMEKYLNQVLRLKFSREARVQQLHKILSYNLPLELENLRSLLQYTRSPVVFCHNDCQEGNILLLEGQENSERRKLMLIDFEYSSYNYRGFDIGNHFCEWMYDYTYEKYPFFRANIQKYPSRKQQLHFISSYLTTFQNDFESLSSEEQFATKEDMLLEVNRFALASHFLWGLWSIVQAKISSIEFGYMEYAQARFEAYFDQKRKLGV.

The segment at 22-81 (CGGNAAPTPGVGQQRDAAGELESKQLGGRTQPLALPPPPPPPLPLPPPPSPPLADEQPEP) is disordered. The span at 55–73 (ALPPPPPPPLPLPPPPSPP) shows a compositional bias: pro residues. Phosphoserine is present on serine 71. Residues 113–119 (RGGLSNM), arginine 142, and 203–209 (QFIPSRR) contribute to the ATP site. 115–117 (GLS) contacts phosphocholine. The residue at position 243 (lysine 243) is an N6-acetyllysine. A Phosphoserine modification is found at serine 275. Residues glutamine 304 and aspartate 326 each coordinate ATP.

This sequence belongs to the choline/ethanolamine kinase family. As to quaternary structure, homodimer. Heterodimer with CHKB. In terms of assembly, monomer; acetylation by KAT5 promotes dissociation of the homodimer and monomerization. In terms of processing, phosphorylated at Ser-275 by AMPK in response to glucose deprivation, leading to localization to lipid droplets. Acetylated by KAT5 at Lys-243 following phosphorylation by AMPK, leading to monomerization and conversion into a tyrosine-protein kinase. In terms of tissue distribution, expressed ubiquitously with the highest level in testis.

Its subcellular location is the cytoplasm. The protein resides in the cytosol. It localises to the lipid droplet. It carries out the reaction choline + ATP = phosphocholine + ADP + H(+). It catalyses the reaction ethanolamine + ATP = phosphoethanolamine + ADP + H(+). The catalysed reaction is L-tyrosyl-[protein] + ATP = O-phospho-L-tyrosyl-[protein] + ADP + H(+). It participates in phospholipid metabolism; phosphatidylcholine biosynthesis; phosphocholine from choline: step 1/1. Its pathway is phospholipid metabolism; phosphatidylethanolamine biosynthesis; phosphatidylethanolamine from ethanolamine: step 1/3. In terms of biological role, plays a key role in phospholipid biosynthesis by catalyzing the phosphorylation of free choline to phosphocholine, the first step in phosphatidylcholine biosynthesis. Also phosphorylates ethanolamine, thereby contributing to phosphatidylethanolamine biosynthesis. Has higher activity with choline. Its function is as follows. This isoform plays a key role in lipolysis of lipid droplets following glucose deprivation. In response to glucose deprivation, phosphorylated by AMPK, promoting localization to lipid droplets. Phosphorylation is followed by acetylation by KAT5, leading to dissociation of the homodimer into a monomer. Monomeric CHKA isoform 1 is converted into a tyrosine-protein kinase, which phosphorylates lipid droplet structural proteins PLIN2 and PLIN3, leading to lipolysis of lipid droplets. The polypeptide is Choline kinase alpha (Chka) (Mus musculus (Mouse)).